A 533-amino-acid polypeptide reads, in one-letter code: Acetone monooxygenase (methyl acetate-forming) (533 aa).

Residues 43–46 (TWYW), 55–56 (DS), and Tyr-61 contribute to the FAD site. Position 53–55 (53–55 (RFD)) interacts with NADP(+). NADP(+) contacts are provided by residues 183–189 (NGATGIQ), 206–207 (RT), and Trp-492.

This sequence belongs to the FAD-binding monooxygenase family. In terms of assembly, homotetramer. FAD is required as a cofactor.

The enzyme catalyses acetone + NADPH + O2 + H(+) = methyl acetate + NADP(+) + H2O. Its function is as follows. Plays an important role in the metabolism of acetone derived from propane oxidation. Catalyzes the oxidation of acetone to methyl acetate. Exhibits high catalytic efficiency towards various linear and cyclic ketones, such as butanone, 2-pentanone, 2-heptanone, 2-octanone, 2-nonanone, 2-decanone, cyclobutanone, cyclopentanone and cyclohexanone. Elicits the highest catalytic efficiency towards butanone and cyclobutanone. Is highly specific for NADPH and cannot use NADH. The polypeptide is Acetone monooxygenase (methyl acetate-forming) (Gordonia sp. (strain TY-5)).